The chain runs to 631 residues: Phosphomethylpyrimidine synthase (631 aa).

Residues Asn-239, Met-268, Tyr-297, His-333, 353–355, 394–397, and Glu-433 each bind substrate; these read SRG and DGLR. His-437 is a binding site for Zn(2+). Position 460 (Tyr-460) interacts with substrate. His-501 contacts Zn(2+). Positions 581, 584, and 589 each coordinate [4Fe-4S] cluster.

It belongs to the ThiC family. As to quaternary structure, homodimer. The cofactor is [4Fe-4S] cluster.

It carries out the reaction 5-amino-1-(5-phospho-beta-D-ribosyl)imidazole + S-adenosyl-L-methionine = 4-amino-2-methyl-5-(phosphooxymethyl)pyrimidine + CO + 5'-deoxyadenosine + formate + L-methionine + 3 H(+). It participates in cofactor biosynthesis; thiamine diphosphate biosynthesis. In terms of biological role, catalyzes the synthesis of the hydroxymethylpyrimidine phosphate (HMP-P) moiety of thiamine from aminoimidazole ribotide (AIR) in a radical S-adenosyl-L-methionine (SAM)-dependent reaction. The chain is Phosphomethylpyrimidine synthase from Escherichia coli O6:H1 (strain CFT073 / ATCC 700928 / UPEC).